An 86-amino-acid chain; its full sequence is RNA-binding protein Hfq (86 aa).

The 62-residue stretch at 12–73 folds into the Sm domain; that stretch reads DIFLNQVRKE…ISTITPQKPV (62 aa).

It belongs to the Hfq family. As to quaternary structure, homohexamer.

Functionally, RNA chaperone that binds small regulatory RNA (sRNAs) and mRNAs to facilitate mRNA translational regulation in response to envelope stress, environmental stress and changes in metabolite concentrations. Also binds with high specificity to tRNAs. In Thermoanaerobacter pseudethanolicus (strain ATCC 33223 / 39E) (Clostridium thermohydrosulfuricum), this protein is RNA-binding protein Hfq.